We begin with the raw amino-acid sequence, 431 residues long: Enolase (431 aa).

Residue Q166 participates in (2R)-2-phosphoglycerate binding. E208 (proton donor) is an active-site residue. Mg(2+) is bound by residues D245, E289, and D316. Positions 341, 370, 371, and 392 each coordinate (2R)-2-phosphoglycerate. The active-site Proton acceptor is K341.

Belongs to the enolase family. The cofactor is Mg(2+).

It is found in the cytoplasm. The protein localises to the secreted. Its subcellular location is the cell surface. The catalysed reaction is (2R)-2-phosphoglycerate = phosphoenolpyruvate + H2O. It participates in carbohydrate degradation; glycolysis; pyruvate from D-glyceraldehyde 3-phosphate: step 4/5. Functionally, catalyzes the reversible conversion of 2-phosphoglycerate (2-PG) into phosphoenolpyruvate (PEP). It is essential for the degradation of carbohydrates via glycolysis. The sequence is that of Enolase from Ruminiclostridium cellulolyticum (strain ATCC 35319 / DSM 5812 / JCM 6584 / H10) (Clostridium cellulolyticum).